Here is a 207-residue protein sequence, read N- to C-terminus: Glycerol-3-phosphate acyltransferase (207 aa).

5 helical membrane-spanning segments follow: residues 4–24 (VVAT…SFAV), 58–78 (ILTL…AQWL), 86–106 (ETGI…PVFH), 120–140 (ILLA…LIIA), and 162–182 (VLMN…VLLI).

Belongs to the PlsY family. As to quaternary structure, probably interacts with PlsX.

Its subcellular location is the cell inner membrane. It catalyses the reaction an acyl phosphate + sn-glycerol 3-phosphate = a 1-acyl-sn-glycero-3-phosphate + phosphate. It functions in the pathway lipid metabolism; phospholipid metabolism. Catalyzes the transfer of an acyl group from acyl-phosphate (acyl-PO(4)) to glycerol-3-phosphate (G3P) to form lysophosphatidic acid (LPA). This enzyme utilizes acyl-phosphate as fatty acyl donor, but not acyl-CoA or acyl-ACP. In Ralstonia pickettii (strain 12J), this protein is Glycerol-3-phosphate acyltransferase.